The chain runs to 348 residues: 4-hydroxy-3-methylbut-2-en-1-yl diphosphate synthase (flavodoxin) (348 aa).

Positions 263, 266, 298, and 305 each coordinate [4Fe-4S] cluster.

Belongs to the IspG family. [4Fe-4S] cluster serves as cofactor.

The catalysed reaction is (2E)-4-hydroxy-3-methylbut-2-enyl diphosphate + oxidized [flavodoxin] + H2O + 2 H(+) = 2-C-methyl-D-erythritol 2,4-cyclic diphosphate + reduced [flavodoxin]. Its pathway is isoprenoid biosynthesis; isopentenyl diphosphate biosynthesis via DXP pathway; isopentenyl diphosphate from 1-deoxy-D-xylulose 5-phosphate: step 5/6. Functionally, converts 2C-methyl-D-erythritol 2,4-cyclodiphosphate (ME-2,4cPP) into 1-hydroxy-2-methyl-2-(E)-butenyl 4-diphosphate. This chain is 4-hydroxy-3-methylbut-2-en-1-yl diphosphate synthase (flavodoxin), found in Dehalococcoides mccartyi (strain CBDB1).